Reading from the N-terminus, the 919-residue chain is DNA double-strand break repair Rad50 ATPase (919 aa).

ATP contacts are provided by residues 33 to 39 and glutamine 143; that span reads NGAGKST. 3 coiled-coil regions span residues 208–268, 315–379, and 414–458; these read MTLR…MLVN, HEVA…RRYT, and ESVL…LEES. In terms of domain architecture, Zinc-hook spans 417–516; it reads LERLDAVIND…EASRLQDKRR (100 aa). Residues cysteine 464 and cysteine 467 each contribute to the Zn(2+) site. Coiled-coil stretches lie at residues 486–515, 541–595, and 635–749; these read EAER…QDKR, EDLA…LQRL, and AYRS…RKAS.

Belongs to the SMC family. RAD50 subfamily. In terms of assembly, homodimer. Forms a heterotetramer composed of two Mre11 subunits and two Rad50 subunits. Zn(2+) is required as a cofactor.

Functionally, part of the Rad50/Mre11 complex, which is involved in the early steps of DNA double-strand break (DSB) repair. The complex may facilitate opening of the processed DNA ends to aid in the recruitment of HerA and NurA. Rad50 controls the balance between DNA end bridging and DNA resection via ATP-dependent structural rearrangements of the Rad50/Mre11 complex. This is DNA double-strand break repair Rad50 ATPase from Aeropyrum pernix (strain ATCC 700893 / DSM 11879 / JCM 9820 / NBRC 100138 / K1).